The primary structure comprises 178 residues: Caveolin-1 (178 aa).

Ser2 is modified (N-acetylserine). Residue Ser2 is modified to Phosphoserine. A required for homooligomerization region spans residues Ser2–Val94. The Cytoplasmic portion of the chain corresponds to Ser2–Ser104. Position 5 is an N6-acetyllysine; alternate (Lys5). Lys5 participates in a covalent cross-link: Glycyl lysine isopeptide (Lys-Gly) (interchain with G-Cter in ubiquitin); alternate. Tyr6 bears the Phosphotyrosine mark. The residue at position 9 (Ser9) is a Phosphoserine. Tyr14 carries the post-translational modification Phosphotyrosine; by ABL1. Phosphotyrosine is present on Tyr25. Residues Lys26, Lys30, Lys39, Lys47, and Lys57 each participate in a glycyl lysine isopeptide (Lys-Gly) (interchain with G-Cter in ubiquitin) cross-link. The segment at Asp82–Val94 is interaction with CAVIN3. Positions Ala105–Leu125 form an intramembrane region, helical. At His126–Ile178 the chain is on the cytoplasmic side. Residues Val131–Gln142 are interacts with SPRY1, SPRY2, SPRY3 and SPRY4. S-palmitoyl cysteine attachment occurs at residues Cys133, Cys143, and Cys156. An interacts with SPRY1, SPRY2, and SPRY4 region spans residues Ser149 to Phe160. The interval Phe167–Ile178 is interacts with SPRY1, SPRY2, SPRY3 and SPRY4.

Belongs to the caveolin family. In terms of assembly, homooligomer. Interacts with GLIPR2. Interacts with NOSTRIN. Interacts with SNAP25 and STX1A. Interacts (via the N-terminus) with DPP4; the interaction is direct. Interacts with CTNNB1, CDH1 and JUP. Interacts with PACSIN2; this interaction induces membrane tubulation. Interacts with SLC7A9. Interacts with BMX and BTK. Interacts with TGFBR1. Interacts with CAVIN3 (via leucine-zipper domain) in a cholesterol-sensitive manner. Interacts with CAVIN1. Interacts with EHD2 in a cholesterol-dependent manner. Forms a ternary complex with UBXN6 and VCP; mediates CAV1 targeting to lysosomes for degradation. Interacts with ABCG1; this interaction regulates ABCG1-mediated cholesterol efflux. Interacts with NEU3; this interaction enhances NEU3 sialidase activity within caveola. Interacts (via C-terminus) with SPRY1, SPRY2 (via C-terminus), SPRY3, and SPRY4. Interacts with IGFBP5; this interaction allows trafficking of IGFBP5 from the plasma membrane to the nucleus. Post-translationally, phosphorylated at Tyr-14 by ABL1 in response to oxidative stress. Ubiquitinated. Undergo monoubiquitination and multi- and/or polyubiquitination. Monoubiquitination of N-terminal lysines promotes integration in a ternary complex with UBXN6 and VCP which promotes oligomeric CAV1 targeting to lysosomes for degradation. Ubiquitinated by ZNRF1; leading to degradation and modulation of the TLR4-mediated immune response.

It localises to the golgi apparatus membrane. Its subcellular location is the cell membrane. The protein localises to the membrane. It is found in the caveola. The protein resides in the membrane raft. Functionally, may act as a scaffolding protein within caveolar membranes. Forms a stable heterooligomeric complex with CAV2 that targets to lipid rafts and drives caveolae formation. Mediates the recruitment of CAVIN proteins (CAVIN1/2/3/4) to the caveolae. Interacts directly with G-protein alpha subunits and can functionally regulate their activity. Involved in the costimulatory signal essential for T-cell receptor (TCR)-mediated T-cell activation. Its binding to DPP4 induces T-cell proliferation and NF-kappa-B activation in a T-cell receptor/CD3-dependent manner. Recruits CTNNB1 to caveolar membranes and may regulate CTNNB1-mediated signaling through the Wnt pathway. Negatively regulates TGFB1-mediated activation of SMAD2/3 by mediating the internalization of TGFBR1 from membrane rafts leading to its subsequent degradation. Binds 20(S)-hydroxycholesterol (20(S)-OHC). The protein is Caveolin-1 (CAV1) of Muntiacus muntjak (Barking deer).